The primary structure comprises 350 residues: Heat-inducible transcription repressor HrcA (350 aa).

Belongs to the HrcA family.

Its function is as follows. Negative regulator of class I heat shock genes (grpE-dnaK-dnaJ and groELS operons). Prevents heat-shock induction of these operons. This chain is Heat-inducible transcription repressor HrcA, found in Limosilactobacillus reuteri (strain DSM 20016) (Lactobacillus reuteri).